The following is a 227-amino-acid chain: MFHVEPNGGEPAEWDEQAAARQVFGERFDIAERYYKSLASDGVERGLIGPREVPRLWERHLLNCAVVGELIAEGESVVDVGSGAGLPGIPLAIARPDLRITLVEPLLRRSVYLAEFVESNGLDVLVVRGRAEESGVVKEAGGADVVTSRAVAPLEKLAKWSLPLIHEHGRMLALKGSSAAEEISRDRASLTRLGAGKLDIVECGVGLLPVPTVVVRAERVPKRRQRR.

Residues G81, L86, 131–132, and R149 each bind S-adenosyl-L-methionine; that span reads AE.

This sequence belongs to the methyltransferase superfamily. RNA methyltransferase RsmG family.

Its subcellular location is the cytoplasm. Functionally, specifically methylates the N7 position of guanine in position 518 of 16S rRNA. The sequence is that of Ribosomal RNA small subunit methyltransferase G from Rhodococcus jostii (strain RHA1).